Consider the following 252-residue polypeptide: Triosephosphate isomerase (252 aa).

9–11 serves as a coordination point for substrate; it reads NWK. H95 functions as the Electrophile in the catalytic mechanism. E167 acts as the Proton acceptor in catalysis. Residues G173, S213, and 234–235 each bind substrate; that span reads GG.

The protein belongs to the triosephosphate isomerase family. As to quaternary structure, homodimer.

It is found in the cytoplasm. The catalysed reaction is D-glyceraldehyde 3-phosphate = dihydroxyacetone phosphate. It participates in carbohydrate biosynthesis; gluconeogenesis. The protein operates within carbohydrate degradation; glycolysis; D-glyceraldehyde 3-phosphate from glycerone phosphate: step 1/1. Functionally, involved in the gluconeogenesis. Catalyzes stereospecifically the conversion of dihydroxyacetone phosphate (DHAP) to D-glyceraldehyde-3-phosphate (G3P). This chain is Triosephosphate isomerase, found in Syntrophotalea carbinolica (strain DSM 2380 / NBRC 103641 / GraBd1) (Pelobacter carbinolicus).